Here is a 521-residue protein sequence, read N- to C-terminus: Maturase K (521 aa).

Belongs to the intron maturase 2 family. MatK subfamily.

It localises to the plastid. The protein resides in the chloroplast. Usually encoded in the trnK tRNA gene intron. Probably assists in splicing its own and other chloroplast group II introns. The sequence is that of Maturase K from Trillium catesbaei (Catesby's trillium).